A 298-amino-acid polypeptide reads, in one-letter code: Tyrosine recombinase XerD (298 aa).

A Core-binding (CB) domain is found at 3–88 (TLEHPLIDRF…GLRGFYRYCL (86 aa)). The 184-residue stretch at 109-292 (PLPKSLSEAD…ARARLQDLHA (184 aa)) folds into the Tyr recombinase domain. Active-site residues include Arg149, Lys173, His244, Arg247, and His270. Tyr279 acts as the O-(3'-phospho-DNA)-tyrosine intermediate in catalysis.

It belongs to the 'phage' integrase family. XerD subfamily. As to quaternary structure, forms a cyclic heterotetrameric complex composed of two molecules of XerC and two molecules of XerD.

It localises to the cytoplasm. Its function is as follows. Site-specific tyrosine recombinase, which acts by catalyzing the cutting and rejoining of the recombining DNA molecules. The XerC-XerD complex is essential to convert dimers of the bacterial chromosome into monomers to permit their segregation at cell division. It also contributes to the segregational stability of plasmids. The chain is Tyrosine recombinase XerD from Pseudomonas aeruginosa (strain ATCC 15692 / DSM 22644 / CIP 104116 / JCM 14847 / LMG 12228 / 1C / PRS 101 / PAO1).